The following is a 246-amino-acid chain: 1-(5-phosphoribosyl)-5-[(5-phosphoribosylamino)methylideneamino] imidazole-4-carboxamide isomerase (246 aa).

The active-site Proton acceptor is the aspartate 8. The Proton donor role is filled by aspartate 131.

It belongs to the HisA/HisF family.

The protein resides in the cytoplasm. It catalyses the reaction 1-(5-phospho-beta-D-ribosyl)-5-[(5-phospho-beta-D-ribosylamino)methylideneamino]imidazole-4-carboxamide = 5-[(5-phospho-1-deoxy-D-ribulos-1-ylimino)methylamino]-1-(5-phospho-beta-D-ribosyl)imidazole-4-carboxamide. Its pathway is amino-acid biosynthesis; L-histidine biosynthesis; L-histidine from 5-phospho-alpha-D-ribose 1-diphosphate: step 4/9. The polypeptide is 1-(5-phosphoribosyl)-5-[(5-phosphoribosylamino)methylideneamino] imidazole-4-carboxamide isomerase (Chromobacterium violaceum (strain ATCC 12472 / DSM 30191 / JCM 1249 / CCUG 213 / NBRC 12614 / NCIMB 9131 / NCTC 9757 / MK)).